The primary structure comprises 105 residues: Small ribosomal subunit protein uS10 (105 aa).

This sequence belongs to the universal ribosomal protein uS10 family. As to quaternary structure, part of the 30S ribosomal subunit.

Involved in the binding of tRNA to the ribosomes. This is Small ribosomal subunit protein uS10 from Legionella pneumophila (strain Paris).